A 392-amino-acid chain; its full sequence is tRNA (guanine(26)-N(2)/guanine(27)-N(2))-dimethyltransferase (392 aa).

The region spanning 2–375 (EIVQEGIAKI…LSFEEVMKKM (374 aa)) is the Trm1 methyltransferase domain. Residues Arg-36, Arg-66, Asp-84, Glu-113, and Ala-114 each coordinate S-adenosyl-L-methionine. Positions 247, 250, 266, and 269 each coordinate Zn(2+).

This sequence belongs to the class I-like SAM-binding methyltransferase superfamily. Trm1 family.

The enzyme catalyses guanosine(26)/guanosine(27) in tRNA + 4 S-adenosyl-L-methionine = N(2)-dimethylguanosine(26)/N(2)-dimethylguanosine(27) in tRNA + 4 S-adenosyl-L-homocysteine + 4 H(+). Its function is as follows. Dimethylates the guanine residues at position 26 and 27 of one or more tRNAs using S-adenosyl-L-methionine as donor of the methyl groups. The protein is tRNA (guanine(26)-N(2)/guanine(27)-N(2))-dimethyltransferase of Aquifex aeolicus (strain VF5).